We begin with the raw amino-acid sequence, 823 residues long: Lon protease (823 aa).

The 196-residue stretch at 51 to 246 (IPILPLRNMV…RLLFILNREY (196 aa)) folds into the Lon N-terminal domain. An ATP-binding site is contributed by 397–404 (GPPGVGKT). Residues 633-815 (NDYAGVVTGL…QQVVDLALLR (183 aa)) enclose the Lon proteolytic domain. Residues Ser-721 and Lys-764 contribute to the active site.

This sequence belongs to the peptidase S16 family. Homohexamer. Organized in a ring with a central cavity.

The protein localises to the cytoplasm. The catalysed reaction is Hydrolysis of proteins in presence of ATP.. ATP-dependent serine protease that mediates the selective degradation of mutant and abnormal proteins as well as certain short-lived regulatory proteins. Required for cellular homeostasis and for survival from DNA damage and developmental changes induced by stress. Degrades polypeptides processively to yield small peptide fragments that are 5 to 10 amino acids long. Binds to DNA in a double-stranded, site-specific manner. The sequence is that of Lon protease from Parabacteroides distasonis (strain ATCC 8503 / DSM 20701 / CIP 104284 / JCM 5825 / NCTC 11152).